Consider the following 1025-residue polypeptide: Multidrug resistance protein MdtC (1025 aa).

Transmembrane regions (helical) follow at residues 3 to 23, 333 to 353, 360 to 380, 387 to 407, 431 to 451, 463 to 483, 528 to 548, 853 to 873, 875 to 895, 897 to 917, 953 to 973, and 984 to 1004; these read FFALFIYRPVATILLSVAITL, EVEQTLIISVALVILVVFLFL, IIPAVAVPVSLIGTFAAMYLC, LSLMALTIATGFVVDDAIVVL, VGFTVLSMSLSLVAVFLPLLL, FAVTLSVAIGISLLVSLTLTP, LVGVVLLGTIALNIWLYISIP, VILIIAAIATVYIVLGILYES, VHPLTILSTLPSAGVGALLAL, LFNAPFSLIALIGIMLLIGIV, PIMMTTLAALFGALPLVLSGG, and ITIVGGLVMSQLLTLYTTPVV.

Belongs to the resistance-nodulation-cell division (RND) (TC 2.A.6) family. MdtC subfamily. As to quaternary structure, part of a tripartite efflux system composed of MdtA, MdtB and MdtC. MdtC forms a heteromultimer with MdtB.

It is found in the cell inner membrane. Functionally, the MdtABC tripartite complex confers resistance against novobiocin and deoxycholate. This is Multidrug resistance protein MdtC from Escherichia coli O7:K1 (strain IAI39 / ExPEC).